The primary structure comprises 469 residues: Glutamate--tRNA ligase (469 aa).

The 'HIGH' region motif lies at 9-19 (PSPTGFLHVGG). Zn(2+) contacts are provided by C98, C100, C125, and D127. The 'KMSKS' region motif lies at 236-240 (KLSKR). An ATP-binding site is contributed by K239.

The protein belongs to the class-I aminoacyl-tRNA synthetase family. Glutamate--tRNA ligase type 1 subfamily. As to quaternary structure, monomer. Zn(2+) serves as cofactor.

It localises to the cytoplasm. It carries out the reaction tRNA(Glu) + L-glutamate + ATP = L-glutamyl-tRNA(Glu) + AMP + diphosphate. Functionally, catalyzes the attachment of glutamate to tRNA(Glu) in a two-step reaction: glutamate is first activated by ATP to form Glu-AMP and then transferred to the acceptor end of tRNA(Glu). The chain is Glutamate--tRNA ligase from Shewanella sediminis (strain HAW-EB3).